A 623-amino-acid polypeptide reads, in one-letter code: Glutathione import ATP-binding protein GsiA (623 aa).

ABC transporter domains follow at residues 15 to 269 and 325 to 564; these read VSGL…QTLL and LRSG…RKLM. ATP contacts are provided by residues 49–56 and 357–364; these read GESGSGKS.

The protein belongs to the ABC transporter superfamily. Glutathione importer (TC 3.A.1.5.11) family. The complex is composed of two ATP-binding proteins (GsiA), two transmembrane proteins (GsiC and GsiD) and a solute-binding protein (GsiB).

It is found in the cell inner membrane. The catalysed reaction is glutathione(out) + ATP + H2O = glutathione(in) + ADP + phosphate + H(+). In terms of biological role, part of the ABC transporter complex GsiABCD involved in glutathione import. Responsible for energy coupling to the transport system. The chain is Glutathione import ATP-binding protein GsiA from Salmonella choleraesuis (strain SC-B67).